The following is a 106-amino-acid chain: Urease subunit beta (106 aa).

This sequence belongs to the urease beta subunit family. As to quaternary structure, heterotrimer of UreA (gamma), UreB (beta) and UreC (alpha) subunits. Three heterotrimers associate to form the active enzyme.

The protein localises to the cytoplasm. It carries out the reaction urea + 2 H2O + H(+) = hydrogencarbonate + 2 NH4(+). Its pathway is nitrogen metabolism; urea degradation; CO(2) and NH(3) from urea (urease route): step 1/1. This chain is Urease subunit beta, found in Prochlorococcus marinus (strain MIT 9312).